The primary structure comprises 342 residues: uncharacterized protein (342 aa).

This sequence belongs to the cycloisomerase 2 family.

This is an uncharacterized protein from Staphylococcus aureus (strain bovine RF122 / ET3-1).